A 353-amino-acid chain; its full sequence is Photosystem II D2 protein (353 aa).

Thr2 carries the N-acetylthreonine modification. Thr2 is modified (phosphothreonine). Residues 41–61 (CAYFALGGWFTGTTFVTSWYT) traverse the membrane as a helical segment. His118 lines the chlorophyll a pocket. The helical transmembrane segment at 125-141 (GFMLRQFELARSVQLRP) threads the bilayer. Pheophytin a contacts are provided by Gln130 and Asn143. The helical transmembrane segment at 153-166 (VFVSVFFIYPLGQS) threads the bilayer. His198 serves as a coordination point for chlorophyll a. A helical transmembrane segment spans residues 208–228 (AALLCAIHGATVENTLFEDGD). A plastoquinone contacts are provided by His215 and Phe262. His215 lines the Fe cation pocket. Position 269 (His269) interacts with Fe cation. A helical transmembrane segment spans residues 279 to 295 (GLWMSALGVVGLALNLR).

This sequence belongs to the reaction center PufL/M/PsbA/D family. In terms of assembly, PSII is composed of 1 copy each of membrane proteins PsbA, PsbB, PsbC, PsbD, PsbE, PsbF, PsbH, PsbI, PsbJ, PsbK, PsbL, PsbM, PsbT, PsbX, PsbY, PsbZ, Psb30/Ycf12, at least 3 peripheral proteins of the oxygen-evolving complex and a large number of cofactors. It forms dimeric complexes. The D1/D2 heterodimer binds P680, chlorophylls that are the primary electron donor of PSII, and subsequent electron acceptors. It shares a non-heme iron and each subunit binds pheophytin, quinone, additional chlorophylls, carotenoids and lipids. There is also a Cl(-1) ion associated with D1 and D2, which is required for oxygen evolution. The PSII complex binds additional chlorophylls, carotenoids and specific lipids. is required as a cofactor.

It is found in the plastid membrane. The enzyme catalyses 2 a plastoquinone + 4 hnu + 2 H2O = 2 a plastoquinol + O2. In terms of biological role, photosystem II (PSII) is a light-driven water:plastoquinone oxidoreductase that uses light energy to abstract electrons from H(2)O, generating O(2) and a proton gradient subsequently used for ATP formation. It consists of a core antenna complex that captures photons, and an electron transfer chain that converts photonic excitation into a charge separation. The D1/D2 (PsbA/PsbD) reaction center heterodimer binds P680, the primary electron donor of PSII as well as several subsequent electron acceptors. D2 is needed for assembly of a stable PSII complex. The chain is Photosystem II D2 protein from Cuscuta exaltata (Tall dodder).